A 262-amino-acid polypeptide reads, in one-letter code: MSSELSPIDKAKFVCAKRAAQLVESGMRVGLGTGSTAAWLVRCLGQRVRNEGLQITGVPTSTRTAELAREVGIDIITLDAAKRLDLTIDGADEFDGAFNLIKGGGGALLHEKVVAASSDRMVVIADVGKEVETLGAFPLPIEVIPFGLQTTHALVDETLVSMDVLGRDSSLRMDGDKPFVTDEGNHIIDLHLKRIGDARQLALTLNQVPGVVENGLFIDICDTVVLGFGDGKVEVRDINDGTIASERMIFAETDNLFSDLSD.

Substrate is bound by residues 33–36, 89–92, and 102–105; these read TGST, DGAD, and KGGG. The active-site Proton acceptor is Glu111. Residue Lys129 participates in substrate binding.

The protein belongs to the ribose 5-phosphate isomerase family. As to quaternary structure, homodimer.

It catalyses the reaction aldehydo-D-ribose 5-phosphate = D-ribulose 5-phosphate. The protein operates within carbohydrate degradation; pentose phosphate pathway; D-ribose 5-phosphate from D-ribulose 5-phosphate (non-oxidative stage): step 1/1. In terms of biological role, catalyzes the reversible conversion of ribose-5-phosphate to ribulose 5-phosphate. This is Ribose-5-phosphate isomerase A from Roseobacter denitrificans (strain ATCC 33942 / OCh 114) (Erythrobacter sp. (strain OCh 114)).